We begin with the raw amino-acid sequence, 135 residues long: Photosystem II extrinsic protein U (135 aa).

Positions 1-29 are cleaved as a signal peptide; sequence MKRLLSWLTGALVMASLMAGLVMPSSVYA.

This sequence belongs to the PsbU family. As to quaternary structure, PSII is composed of 1 copy each of membrane proteins PsbA, PsbB, PsbC, PsbD, PsbE, PsbF, PsbH, PsbI, PsbJ, PsbK, PsbL, PsbM, PsbT, PsbX, PsbY, PsbZ, Psb30/Ycf12, peripheral proteins PsbO, CyanoQ (PsbQ), PsbU, PsbV and a large number of cofactors. It forms dimeric complexes.

Its subcellular location is the cellular thylakoid membrane. Functionally, one of the extrinsic, lumenal subunits of photosystem II (PSII). PSII is a light-driven water plastoquinone oxidoreductase, using light energy to abstract electrons from H(2)O, generating a proton gradient subsequently used for ATP formation. The extrinsic proteins stabilize the structure of photosystem II oxygen-evolving complex (OEC), the ion environment of oxygen evolution and protect the OEC against heat-induced inactivation. The sequence is that of Photosystem II extrinsic protein U from Synechococcus sp. (strain CC9605).